We begin with the raw amino-acid sequence, 309 residues long: Homoserine kinase (309 aa).

An ATP-binding site is contributed by 95-105 (PHGRGLGSSSA).

It belongs to the GHMP kinase family. Homoserine kinase subfamily.

Its subcellular location is the cytoplasm. The catalysed reaction is L-homoserine + ATP = O-phospho-L-homoserine + ADP + H(+). Its pathway is amino-acid biosynthesis; L-threonine biosynthesis; L-threonine from L-aspartate: step 4/5. Functionally, catalyzes the ATP-dependent phosphorylation of L-homoserine to L-homoserine phosphate. The protein is Homoserine kinase of Streptomyces coelicolor (strain ATCC BAA-471 / A3(2) / M145).